A 307-amino-acid chain; its full sequence is Coproporphyrin III ferrochelatase (307 aa).

Residues Tyr12, Arg29, 45–46, Ser53, and Tyr124 contribute to the Fe-coproporphyrin III site; that span reads RY. Fe(2+) contacts are provided by His181 and Glu263.

Belongs to the ferrochelatase family.

It is found in the cytoplasm. It carries out the reaction Fe-coproporphyrin III + 2 H(+) = coproporphyrin III + Fe(2+). The protein operates within porphyrin-containing compound metabolism; protoheme biosynthesis. Involved in coproporphyrin-dependent heme b biosynthesis. Catalyzes the insertion of ferrous iron into coproporphyrin III to form Fe-coproporphyrin III. The sequence is that of Coproporphyrin III ferrochelatase from Staphylococcus epidermidis (strain ATCC 12228 / FDA PCI 1200).